A 179-amino-acid chain; its full sequence is Large ribosomal subunit protein uL5 (179 aa).

The protein belongs to the universal ribosomal protein uL5 family. As to quaternary structure, part of the 50S ribosomal subunit; part of the 5S rRNA/L5/L18/L25 subcomplex. Contacts the 5S rRNA and the P site tRNA. Forms a bridge to the 30S subunit in the 70S ribosome.

Functionally, this is one of the proteins that bind and probably mediate the attachment of the 5S RNA into the large ribosomal subunit, where it forms part of the central protuberance. In the 70S ribosome it contacts protein S13 of the 30S subunit (bridge B1b), connecting the 2 subunits; this bridge is implicated in subunit movement. Contacts the P site tRNA; the 5S rRNA and some of its associated proteins might help stabilize positioning of ribosome-bound tRNAs. The sequence is that of Large ribosomal subunit protein uL5 from Nitratidesulfovibrio vulgaris (strain DSM 19637 / Miyazaki F) (Desulfovibrio vulgaris).